We begin with the raw amino-acid sequence, 227 residues long: Phosphoglycolate phosphatase (227 aa).

Asp-11 functions as the Nucleophile in the catalytic mechanism. The Mg(2+) site is built by Asp-11, Asp-13, and Asp-176.

The protein belongs to the HAD-like hydrolase superfamily. CbbY/CbbZ/Gph/YieH family. Mg(2+) is required as a cofactor.

The enzyme catalyses 2-phosphoglycolate + H2O = glycolate + phosphate. It functions in the pathway organic acid metabolism; glycolate biosynthesis; glycolate from 2-phosphoglycolate: step 1/1. Its function is as follows. Specifically catalyzes the dephosphorylation of 2-phosphoglycolate. Is involved in the dissimilation of the intracellular 2-phosphoglycolate formed during the DNA repair of 3'-phosphoglycolate ends, a major class of DNA lesions induced by oxidative stress. This is Phosphoglycolate phosphatase from Aliivibrio fischeri (strain ATCC 700601 / ES114) (Vibrio fischeri).